A 156-amino-acid polypeptide reads, in one-letter code: Ribosomal RNA large subunit methyltransferase H (156 aa).

Residues L73, G104, and 123–128 (IGPLTL) contribute to the S-adenosyl-L-methionine site.

It belongs to the RNA methyltransferase RlmH family. As to quaternary structure, homodimer.

It localises to the cytoplasm. The enzyme catalyses pseudouridine(1915) in 23S rRNA + S-adenosyl-L-methionine = N(3)-methylpseudouridine(1915) in 23S rRNA + S-adenosyl-L-homocysteine + H(+). In terms of biological role, specifically methylates the pseudouridine at position 1915 (m3Psi1915) in 23S rRNA. This is Ribosomal RNA large subunit methyltransferase H from Stenotrophomonas maltophilia (strain R551-3).